Consider the following 373-residue polypeptide: D-alanine--D-alanine ligase (373 aa).

The 208-residue stretch at K156 to D363 folds into the ATP-grasp domain. ATP is bound at residue R184–E239. Mg(2+) contacts are provided by D318, E330, and N332.

This sequence belongs to the D-alanine--D-alanine ligase family. Mg(2+) serves as cofactor. Requires Mn(2+) as cofactor.

The protein localises to the cytoplasm. The catalysed reaction is 2 D-alanine + ATP = D-alanyl-D-alanine + ADP + phosphate + H(+). The protein operates within cell wall biogenesis; peptidoglycan biosynthesis. Its function is as follows. Cell wall formation. This Mycolicibacterium smegmatis (strain ATCC 700084 / mc(2)155) (Mycobacterium smegmatis) protein is D-alanine--D-alanine ligase.